Reading from the N-terminus, the 358-residue chain is MAISRLIIENFRNLAAVDLEFDHGFNFLVGNNGSGKTSLLESIFYLGHGRSFKSSVSTRIITYDKPYFTLHGRIWEQQHEWSVGLQKQRKEGLTLVKINGEDGNKISDLAHLLPMQMITPEGLTLLNGGPSYRRAFLDWGLFHHRPNFHSAWSALNRLLKQRNAALQQTYDYTDLQVWDVELSKLAHQVSLWRTDYAEALRPEIEQTCRLFLPELDIQVSFHQGWDKNTDYGDLLRENFARDKHIGYTVSGPQKADFRFKANGFPVEDVLSRGQLKLLMCALRLAQGEHLMVQKNRSCIFLIDDFASELDETKRGLLAERLRQSHSQVFVTAITAEQLKQMQPENHRTFSVNNGMISL.

30–37 (GNNGSGKT) contributes to the ATP binding site.

Belongs to the RecF family.

Its subcellular location is the cytoplasm. The RecF protein is involved in DNA metabolism; it is required for DNA replication and normal SOS inducibility. RecF binds preferentially to single-stranded, linear DNA. It also seems to bind ATP. This chain is DNA replication and repair protein RecF, found in Actinobacillus succinogenes (strain ATCC 55618 / DSM 22257 / CCUG 43843 / 130Z).